A 62-amino-acid polypeptide reads, in one-letter code: Small ribosomal subunit protein eS27 (62 aa).

Zn(2+)-binding residues include cysteine 17, cysteine 20, cysteine 36, and cysteine 39. A C4-type zinc finger spans residues 17–39 (CNDCENEQIIFGSASRKITCVVC).

This sequence belongs to the eukaryotic ribosomal protein eS27 family. As to quaternary structure, part of the 30S ribosomal subunit. Zn(2+) serves as cofactor.

The polypeptide is Small ribosomal subunit protein eS27 (Methanosarcina barkeri (strain Fusaro / DSM 804)).